The chain runs to 461 residues: Photosystem II CP43 reaction center protein (461 aa).

Residues 1-2 (ME) constitute a propeptide that is removed on maturation. At threonine 3 the chain carries N-acetylthreonine. Threonine 3 carries the post-translational modification Phosphothreonine. 5 helical membrane passes run 57 to 81 (LFEVAHFVPQKPMYEQGLILLPHLA), 122 to 143 (LAGPDTLEESFRFFGYTWKRKK), 166 to 188 (KAMYGGGVYDTWWPGGGDVRSIT), 243 to 263 (RPSPWVVRTFVWSGEAYLSYS), and 279 to 300 (WFNNTVYPSEFYGPTGPEASQA). Position 355 (glutamate 355) interacts with [CaMn4O5] cluster. The chain crosses the membrane as a helical span at residues 435–459 (RARAAAIGFEKGIDRSREIARKLKP).

This sequence belongs to the PsbB/PsbC family. PsbC subfamily. In terms of assembly, PSII is composed of 1 copy each of membrane proteins PsbA, PsbB, PsbC, PsbD, PsbE, PsbF, PsbH, PsbI, PsbJ, PsbK, PsbL, PsbM, PsbT, PsbY, PsbZ, Psb30/Ycf12, at least 3 peripheral proteins of the oxygen-evolving complex and a large number of cofactors. It forms dimeric complexes. Requires Binds multiple chlorophylls and provides some of the ligands for the Ca-4Mn-5O cluster of the oxygen-evolving complex. It may also provide a ligand for a Cl- that is required for oxygen evolution. PSII binds additional chlorophylls, carotenoids and specific lipids. as cofactor.

It is found in the plastid. The protein localises to the chloroplast thylakoid membrane. One of the components of the core complex of photosystem II (PSII). It binds chlorophyll and helps catalyze the primary light-induced photochemical processes of PSII. PSII is a light-driven water:plastoquinone oxidoreductase, using light energy to abstract electrons from H(2)O, generating O(2) and a proton gradient subsequently used for ATP formation. This Euglena gracilis protein is Photosystem II CP43 reaction center protein.